We begin with the raw amino-acid sequence, 521 residues long: Apolipoprotein N-acyltransferase (521 aa).

6 consecutive transmembrane segments (helical) span residues 34–54 (LAAP…PLLV), 64–84 (AFWL…RWLL), 100–120 (LAIA…VIGL), 137–157 (LFAV…ETAF), 176–196 (VALG…ALVA), and 206–226 (YAGL…WQLA). A CN hydrolase domain is found at 240-480 (IQGNIAQARK…YAAFVEPVRL (241 aa)). Glu281 acts as the Proton acceptor in catalysis. Lys341 is an active-site residue. Catalysis depends on Cys392, which acts as the Nucleophile. The chain crosses the membrane as a helical span at residues 488-508 (ALWGDWFVPLSAALALLGLIA).

The protein belongs to the CN hydrolase family. Apolipoprotein N-acyltransferase subfamily.

The protein resides in the cell inner membrane. It carries out the reaction N-terminal S-1,2-diacyl-sn-glyceryl-L-cysteinyl-[lipoprotein] + a glycerophospholipid = N-acyl-S-1,2-diacyl-sn-glyceryl-L-cysteinyl-[lipoprotein] + a 2-acyl-sn-glycero-3-phospholipid + H(+). It functions in the pathway protein modification; lipoprotein biosynthesis (N-acyl transfer). Its function is as follows. Catalyzes the phospholipid dependent N-acylation of the N-terminal cysteine of apolipoprotein, the last step in lipoprotein maturation. The sequence is that of Apolipoprotein N-acyltransferase from Gloeobacter violaceus (strain ATCC 29082 / PCC 7421).